The chain runs to 359 residues: Hsp70-binding protein 1 (359 aa).

The disordered stretch occupies residues 1–71 (MSDEGSRGSR…PPPEPMSEER (71 aa)). Residues 23–37 (SSGGGGGGSSAGGSG) are compositionally biased toward gly residues. ARM repeat units follow at residues 132–174 (ENMD…TCSQ), 177–217 (AAIQ…CLVR), 220–259 (EAGL…NLLV), and 262–301 (PEHK…SLVT). Phosphoserine occurs at positions 351 and 356.

Interacts with the ATP-binding domain of HSPA1A. Detected in a ternary complex containing STUB1, HSPA1A and HSPBP1. Interacts with PGLYRP1; this interaction blocks the cytotoxic activity of the PGLYRP1-HSPA1A complex. Ubiquitous.

In terms of biological role, inhibits HSPA1A chaperone activity by changing the conformation of the ATP-binding domain of HSPA1A and interfering with ATP binding. Interferes with ubiquitination mediated by STUB1 and inhibits chaperone-assisted degradation of immature CFTR. This chain is Hsp70-binding protein 1, found in Homo sapiens (Human).